The chain runs to 323 residues: tRNA dimethylallyltransferase (323 aa).

12-19 (GPTAAGKT) is an ATP binding site. 14–19 (TAAGKT) lines the substrate pocket. Interaction with substrate tRNA stretches follow at residues 37–40 (DSAL) and 161–165 (QRLIR).

This sequence belongs to the IPP transferase family. Monomer. The cofactor is Mg(2+).

The catalysed reaction is adenosine(37) in tRNA + dimethylallyl diphosphate = N(6)-dimethylallyladenosine(37) in tRNA + diphosphate. Catalyzes the transfer of a dimethylallyl group onto the adenine at position 37 in tRNAs that read codons beginning with uridine, leading to the formation of N6-(dimethylallyl)adenosine (i(6)A). The protein is tRNA dimethylallyltransferase of Pseudomonas syringae pv. syringae (strain B728a).